The sequence spans 81 residues: Putative CNGA1-overlapping antisense gene protein (81 aa).

In terms of tissue distribution, expressed in brain, notably in regions involved in long-term potentiation and long-term depression, such as hippocampal CA1 and CA3, dentate gyrus and cerebellar Purkinje layer.

The polypeptide is Putative CNGA1-overlapping antisense gene protein (Homo sapiens (Human)).